The chain runs to 323 residues: Aquaporin-4 (323 aa).

The Cytoplasmic portion of the chain corresponds to 1–36 (MSDRPAARRWGKCGPLCTRESIMVAFKGVWTQTFWK). Residues Cys-13 and Cys-17 are each lipidated (S-palmitoyl cysteine). The chain crosses the membrane as a helical span at residues 37 to 57 (AVTAEFLAMLIFVLLSLGSTI). The Extracellular portion of the chain corresponds to 58 to 69 (NWGGAEKPLPVD). The helical transmembrane segment at 70-89 (MVLISLCFGLSIATMVQCFG) threads the bilayer. Residues 90–93 (HISG) lie on the Cytoplasmic side of the membrane. An intramembrane region (discontinuously helical) is located at residues 94–101 (GHINPAVT). The NPA 1 motif lies at 97-99 (NPA). Over 102–115 (VAMVCTRRISIAKS) the chain is Cytoplasmic. Residue Ser-111 is modified to Phosphoserine; by PKG. The helical transmembrane segment at 116 to 136 (VFYIAAQCLGAIIGAGILYLV) threads the bilayer. Residues 137 to 155 (TPPSVVGGLGVTTVHGNLS) lie on the Extracellular side of the membrane. N-linked (GlcNAc...) asparagine glycosylation is present at Asn-153. A helical transmembrane segment spans residues 156-176 (AGHGLLVELIITFQLVFTIFA). Over 177–184 (SCDSKRTD) the chain is Cytoplasmic. At Ser-180 the chain carries Phosphoserine; by PKC. The chain crosses the membrane as a helical span at residues 185–205 (VTGSIALAIGISVAIGHLFAI). Residue Asn-206 is glycosylated (N-linked (GlcNAc...) asparagine). The Extracellular portion of the chain corresponds to 206–208 (NYT). The segment at residues 209–222 (GASMNPARSFGPAV) is an intramembrane region (discontinuously helical). An NPA 2 motif is present at residues 213 to 215 (NPA). Topologically, residues 223 to 231 (IMGNWENHW) are extracellular. Residues 232–252 (IYWVGPIIGAVLAGGLYEYVF) traverse the membrane as a helical segment. The Cytoplasmic portion of the chain corresponds to 253-323 (CPDVELKRRF…DPSGEVLSSV (71 aa)). 2 positions are modified to phosphoserine: Ser-276 and Ser-285. Thr-289 carries the phosphothreonine modification. Ser-321 carries the post-translational modification Phosphoserine.

This sequence belongs to the MIP/aquaporin (TC 1.A.8) family. As to quaternary structure, homotetramer. The tetramers can form oligomeric arrays in membranes. The size of the oligomers differs between tissues and is smaller in skeletal muscle than in brain. Interaction between AQP4 oligomeric arrays in close-by cells can contribute to cell-cell adhesion. Part of a complex containing MLC1, TRPV4, HEPACAM and ATP1B1. Phosphorylation by PKC at Ser-180 reduces conductance by 50%. Phosphorylation by PKG at Ser-111 in response to glutamate increases conductance by 40%. Post-translationally, isoform 2: Palmitoylated on its N-terminal region. Isoform 1: Not palmitoylated. In terms of tissue distribution, detected in brain and lung.

It is found in the cell membrane. Its subcellular location is the basolateral cell membrane. It localises to the endosome membrane. The protein localises to the sarcolemma. The protein resides in the cell projection. It carries out the reaction H2O(in) = H2O(out). Functionally, forms a water-specific channel. Plays an important role in brain water homeostasis and in glymphatic solute transport. Required for a normal rate of water exchange across the blood brain interface. Required for normal levels of cerebrospinal fluid influx into the brain cortex and parenchyma along paravascular spaces that surround penetrating arteries, and for normal drainage of interstitial fluid along paravenous drainage pathways. Thereby, it is required for normal clearance of solutes from the brain interstitial fluid, including soluble beta-amyloid peptides derived from APP. Plays a redundant role in urinary water homeostasis and urinary concentrating ability. The protein is Aquaporin-4 (AQP4) of Bos taurus (Bovine).